The following is a 420-amino-acid chain: Gamma-glutamyl phosphate reductase (420 aa).

Belongs to the gamma-glutamyl phosphate reductase family.

It is found in the cytoplasm. It carries out the reaction L-glutamate 5-semialdehyde + phosphate + NADP(+) = L-glutamyl 5-phosphate + NADPH + H(+). It functions in the pathway amino-acid biosynthesis; L-proline biosynthesis; L-glutamate 5-semialdehyde from L-glutamate: step 2/2. In terms of biological role, catalyzes the NADPH-dependent reduction of L-glutamate 5-phosphate into L-glutamate 5-semialdehyde and phosphate. The product spontaneously undergoes cyclization to form 1-pyrroline-5-carboxylate. This chain is Gamma-glutamyl phosphate reductase, found in Streptococcus pneumoniae (strain JJA).